The chain runs to 2427 residues: Interferon-induced very large GTPase 1 (2427 aa).

A VLIG-type G domain is found at Asp1485–Gln1726. GTP contacts are provided by residues Gly1495–Ser1502, Asp1548–Gly1551, and Thr1625–Asp1628.

Belongs to the TRAFAC class dynamin-like GTPase superfamily. Very large inducible GTPase (VLIG) family. In terms of tissue distribution, widely expressed. Expressed at low basal level in lung, heart, thymus and spleen; at still lower level in liver, ovary, kidney and brain. Expressed at very weak level in testis. Undetectable in embryo.

It is found in the cytoplasm. The protein localises to the cytosol. Its subcellular location is the nucleus. This is Interferon-induced very large GTPase 1 (Gvin1) from Mus musculus (Mouse).